The following is a 601-amino-acid chain: Testis-specific gene 10 protein (601 aa).

The span at 1–10 (MMRSRSKSPR) shows a compositional bias: basic residues. 2 disordered regions span residues 1–20 (MMRSRSKSPRRPSPTARGAN) and 563–588 (VSSTMKPNTKCHSPERAHHRSPDRGL). The segment at 459–592 (QMTNERISMQ…SPDRGLDRSL (134 aa)) is interaction with HIF1A. Over residues 563–573 (VSSTMKPNTKC) the composition is skewed to polar residues. Basic and acidic residues predominate over residues 574–588 (HSPERAHHRSPDRGL). Ser591 carries the post-translational modification Phosphoserine.

This sequence belongs to the CEP135/TSGA10 family. As to quaternary structure, interacts with HIF1A. Post-translationally, processed into N-terminal 27-kDa and C-terminal 55-kDa fragments.

The protein localises to the cytoplasm. It is found in the cytoskeleton. It localises to the microtubule organizing center. The protein resides in the centrosome. Its subcellular location is the centriole. Plays a role in spermatogenesis. When overexpressed, prevents nuclear localization of HIF1A. This is Testis-specific gene 10 protein (TSGA10) from Macaca fascicularis (Crab-eating macaque).